The chain runs to 283 residues: D-alanine aminotransferase (283 aa).

A substrate-binding site is contributed by Y32. R51 contacts pyridoxal 5'-phosphate. 2 residues coordinate substrate: R99 and H101. K146 serves as the catalytic Proton acceptor. At K146 the chain carries N6-(pyridoxal phosphate)lysine. E178 contributes to the pyridoxal 5'-phosphate binding site.

Belongs to the class-IV pyridoxal-phosphate-dependent aminotransferase family. In terms of assembly, homodimer. Requires pyridoxal 5'-phosphate as cofactor.

The catalysed reaction is D-alanine + 2-oxoglutarate = D-glutamate + pyruvate. In terms of biological role, acts on the D-isomers of alanine, leucine, aspartate, glutamate, aminobutyrate, norvaline and asparagine. The enzyme transfers an amino group from a substrate D-amino acid to the pyridoxal phosphate cofactor to form pyridoxamine and an alpha-keto acid in the first half-reaction. The second half-reaction is the reverse of the first, transferring the amino group from the pyridoxamine to a second alpha-keto acid to form the product D-amino acid via a ping-pong mechanism. This is an important process in the formation of D-alanine and D-glutamate, which are essential bacterial cell wall components. The protein is D-alanine aminotransferase (dat) of Lysinibacillus sphaericus (Bacillus sphaericus).